An 814-amino-acid chain; its full sequence is Kinesin-like protein KIF6 (814 aa).

One can recognise a Kinesin motor domain in the interval 5–345 (TIQIFARVKP…CRFAQRVALI (341 aa)). 97–104 (GQTGSGKT) lines the ATP pocket. Coiled-coil stretches lie at residues 356 to 385 (NPRL…QRTE), 456 to 494 (LKEE…EALH), and 588 to 683 (EAKA…KEFE). The segment at 752–788 (LPSPCPSPHSQKQSSTSTPLEDSIPKRPVSSIPLTGD) is disordered. Positions 759–771 (PHSQKQSSTSTPL) are enriched in polar residues.

Belongs to the TRAFAC class myosin-kinesin ATPase superfamily. Kinesin family.

It is found in the cytoplasm. It localises to the cytoskeleton. This is Kinesin-like protein KIF6 (KIF6) from Homo sapiens (Human).